A 307-amino-acid polypeptide reads, in one-letter code: ATP-dependent (S)-NAD(P)H-hydrate dehydratase (307 aa).

The 291-residue stretch at 1–291 folds into the YjeF C-terminal domain; that stretch reads MDHFLKLLPK…DEIPKLVRDV (291 aa). Residues Gly96 and 150–156 each bind (6S)-NADPHX; that span reads NIVEFSR. Residues 194-198 and 214-223 contribute to the ATP site; these read KGEVD and SSLRRCGGQG. Asp224 lines the (6S)-NADPHX pocket.

The protein belongs to the NnrD/CARKD family. Mg(2+) serves as cofactor.

It catalyses the reaction (6S)-NADHX + ATP = ADP + phosphate + NADH + H(+). The enzyme catalyses (6S)-NADPHX + ATP = ADP + phosphate + NADPH + H(+). Catalyzes the dehydration of the S-form of NAD(P)HX at the expense of ATP, which is converted to ADP. Together with NAD(P)HX epimerase, which catalyzes the epimerization of the S- and R-forms, the enzyme allows the repair of both epimers of NAD(P)HX, a damaged form of NAD(P)H that is a result of enzymatic or heat-dependent hydration. The sequence is that of ATP-dependent (S)-NAD(P)H-hydrate dehydratase from Caenorhabditis briggsae.